Here is a 258-residue protein sequence, read N- to C-terminus: Type III pantothenate kinase (258 aa).

6–13 (DVGNTNTV) provides a ligand contact to ATP. Substrate contacts are provided by residues Tyr100 and 107–110 (GADR). Catalysis depends on Asp109, which acts as the Proton acceptor. Position 129 (Asp129) interacts with K(+). Thr132 provides a ligand contact to ATP. Residue Thr184 participates in substrate binding.

This sequence belongs to the type III pantothenate kinase family. Homodimer. It depends on NH4(+) as a cofactor. K(+) is required as a cofactor.

It is found in the cytoplasm. The enzyme catalyses (R)-pantothenate + ATP = (R)-4'-phosphopantothenate + ADP + H(+). It participates in cofactor biosynthesis; coenzyme A biosynthesis; CoA from (R)-pantothenate: step 1/5. In terms of biological role, catalyzes the phosphorylation of pantothenate (Pan), the first step in CoA biosynthesis. The chain is Type III pantothenate kinase from Bacillus licheniformis (strain ATCC 14580 / DSM 13 / JCM 2505 / CCUG 7422 / NBRC 12200 / NCIMB 9375 / NCTC 10341 / NRRL NRS-1264 / Gibson 46).